A 336-amino-acid chain; its full sequence is Aldehyde reductase AdhA (336 aa).

Zn(2+) contacts are provided by Cys36, Cys39, His61, Cys92, Cys95, Cys98, Cys106, and Cys148.

Belongs to the zinc-containing alcohol dehydrogenase family. In terms of assembly, homotetramer. The cofactor is Zn(2+).

It localises to the cytoplasm. It carries out the reaction a primary alcohol + NADP(+) = an aldehyde + NADPH + H(+). Functionally, active on a wide variety of primary alcohols and their corresponding aldehydes, but not against ketones nor secondary alcohols. Active on aliphatic compounds up to 5 carbons in length and aromatic alcohols, less effective on branched-chain primary alcohols. Prefers NADPH to NADH. Its catalytic efficiency is greatest for aldehydes, suggesting the reduction of aromatic and medium-chain aliphatic aldehydes is its in vivo activity. Plays a role in tolerance to internally produced ethanol. The protein is Aldehyde reductase AdhA of Synechocystis sp. (strain ATCC 27184 / PCC 6803 / Kazusa).